The primary structure comprises 495 residues: Growth/differentiation factor 5 (495 aa).

The signal sequence occupies residues 1–27 (MRLPKLLTLLLWHLAWLDLELICTVLG). Residues 28–375 (APDLGQRTPG…YLFSQRRKRR (348 aa)) constitute a propeptide that is removed on maturation. The disordered stretch occupies residues 30 to 162 (DLGQRTPGAK…KEPFRPPPIT (133 aa)). Residues 124 to 137 (GGKASSKAGSAPSS) show a composition bias toward low complexity. Over residues 142 to 156 (KTREPGTPREPKEPF) the composition is skewed to basic and acidic residues. Asn-183 is a glycosylation site (N-linked (GlcNAc...) asparagine). 3 disulfide bridges follow: Cys-394-Cys-460, Cys-423-Cys-492, and Cys-427-Cys-494.

This sequence belongs to the TGF-beta family. In terms of assembly, homodimer; disulfide-linked. Interacts with serine proteases, HTRA1 and HTRA3. Following LPS binding, may form a complex with CXCR4, HSP90AA1 and HSPA8. Interacts with high affinity with NOG; inhibits chondrogenesis. Interacts with high affinity with BMPR1B and lower affinity with BMPR1A; positively regulates chondrocyte differentiation and induces SMAD-dependent signaling. Interacts with FBN1 (via N-terminal domain) and FBN2. Interacts with TGFBR3.

The protein resides in the secreted. It is found in the cell membrane. Functionally, growth factor involved in bone and cartilage formation. During cartilage development regulates differentiation of chondrogenic tissue through two pathways. Firstly, positively regulates differentiation of chondrogenic tissue through its binding of high affinity with BMPR1B and of less affinity with BMPR1A, leading to induction of SMAD1-SMAD5-SMAD8 complex phosphorylation and then SMAD protein signaling transduction. Secondly, negatively regulates chondrogenic differentiation through its interaction with NOG. Required to prevent excessive muscle loss upon denervation. This function requires SMAD4 and is mediated by phosphorylated SMAD1/5/8. Binds bacterial lipopolysaccharide (LPS) and mediates LPS-induced inflammatory response, including TNF secretion by monocytes. This is Growth/differentiation factor 5 (Gdf5) from Mus musculus (Mouse).